Reading from the N-terminus, the 39-residue chain is Photosystem II reaction center protein J (39 aa).

The helical transmembrane segment at 7-27 (IPLWIVATVAGTGVLVVVGLF) threads the bilayer.

It belongs to the PsbJ family. PSII is composed of 1 copy each of membrane proteins PsbA, PsbB, PsbC, PsbD, PsbE, PsbF, PsbH, PsbI, PsbJ, PsbK, PsbL, PsbM, PsbT, PsbX, PsbY, PsbZ, Psb30/Ycf12, peripheral proteins PsbO, CyanoQ (PsbQ), PsbU, PsbV and a large number of cofactors. It forms dimeric complexes.

It localises to the cellular thylakoid membrane. Functionally, one of the components of the core complex of photosystem II (PSII). PSII is a light-driven water:plastoquinone oxidoreductase that uses light energy to abstract electrons from H(2)O, generating O(2) and a proton gradient subsequently used for ATP formation. It consists of a core antenna complex that captures photons, and an electron transfer chain that converts photonic excitation into a charge separation. This is Photosystem II reaction center protein J from Synechococcus elongatus (strain ATCC 33912 / PCC 7942 / FACHB-805) (Anacystis nidulans R2).